The sequence spans 156 residues: Small ribosomal subunit protein uS7 (156 aa).

Belongs to the universal ribosomal protein uS7 family. Part of the 30S ribosomal subunit. Contacts proteins S9 and S11.

Its function is as follows. One of the primary rRNA binding proteins, it binds directly to 16S rRNA where it nucleates assembly of the head domain of the 30S subunit. Is located at the subunit interface close to the decoding center, probably blocks exit of the E-site tRNA. The protein is Small ribosomal subunit protein uS7 of Bifidobacterium longum subsp. infantis (strain ATCC 15697 / DSM 20088 / JCM 1222 / NCTC 11817 / S12).